A 1741-amino-acid polypeptide reads, in one-letter code: Protein wings apart-like (1741 aa).

Disordered regions lie at residues 68–100 (SPSQ…FFKS), 119–277 (CGAG…EVAA), 291–472 (SSTF…KPPK), 490–612 (KAAA…VQED), 675–810 (LAVL…ASVN), 823–963 (KAEA…QRGA), 1038–1068 (AAGK…STLR), 1112–1141 (SAAG…RVDR), and 1708–1741 (TSST…SSHR). Basic residues predominate over residues 165 to 174 (RKRKSPKKKA). Over residues 175-185 (ATTSASTPSTP) the composition is skewed to low complexity. The residue at position 258 (threonine 258) is a Phosphothreonine. Over residues 309–334 (APSASASTSSQLPSASGSASNPPSAS) the composition is skewed to low complexity. Phosphoserine is present on serine 355. A compositionally biased stretch (polar residues) spans 367–377 (AHQNQLNQLSV). Over residues 408–426 (AADSVDGSSAAVGGASAGD) the composition is skewed to low complexity. The segment covering 438-456 (PNEDEEEEEEEEDEEEEPP) has biased composition (acidic residues). A compositionally biased stretch (basic residues) spans 503 to 512 (SRSKKHKHKQ). Composition is skewed to low complexity over residues 515 to 529 (AAGS…ATPA) and 553 to 568 (QHTP…LHPQ). Residues 586-604 (SQSSVLGSISSKGNSTPQL) are compositionally biased toward polar residues. 2 stretches are compositionally biased toward low complexity: residues 796 to 810 (NAAA…ASVN) and 849 to 859 (QQVTQVLQQEP). A compositionally biased stretch (acidic residues) spans 860–873 (VPEEQETPDAEEEQ). Residues 880–894 (PHTDHREHSPDHDPD) are compositionally biased toward basic and acidic residues. Serine 888 carries the phosphoserine modification. Composition is skewed to low complexity over residues 939–952 (GAAN…AAAA) and 1047–1065 (GDSP…SSAS). A compositionally biased stretch (gly residues) spans 1117 to 1136 (SAGGTGATTGGGGATGGGGP). The WAPL domain maps to 1140 to 1648 (DRKTKDYYPV…EKYHTFMNLT (509 aa)). A compositionally biased stretch (low complexity) spans 1708 to 1730 (TSSTTVGSGSAPSSTSATGTTRA).

It belongs to the WAPL family.

In terms of biological role, has a role in female meiotic chromosome segregation in females; proximal heterochromatin is involved in chromosome pairing during female meiosis. Is a dominant suppressor of both white and Stubble position-effect variegation (PEV), while it is a weak enhancer of brown variegation. The chain is Protein wings apart-like from Drosophila melanogaster (Fruit fly).